Here is a 136-residue protein sequence, read N- to C-terminus: Histone H3.Y (136 aa).

Low complexity predominate over residues 1–16 (MARTKQTARKATAWQA). The disordered stretch occupies residues 1–43 (MARTKQTARKATAWQAPRKPLATKAAGKRAPPTGGIKKPHRYK). An Asymmetric dimethylarginine modification is found at arginine 3. At arginine 3 the chain carries Citrulline; alternate. The residue at position 4 (threonine 4) is a Phosphothreonine. Allysine; alternate is present on lysine 5. Residue lysine 5 is modified to N6,N6,N6-trimethyllysine; alternate. Lysine 5 is subject to N6,N6-dimethyllysine; alternate. Lysine 5 is modified (N6-(2-hydroxyisobutyryl)lysine; alternate). The residue at position 5 (lysine 5) is an N6-(beta-hydroxybutyryl)lysine; alternate. Lysine 5 is subject to N6-acetyllysine; alternate. Lysine 5 carries the post-translational modification N6-crotonyllysine; alternate. An N6-methyllysine; alternate modification is found at lysine 5. 5-glutamyl dopamine; alternate is present on glutamine 6. Residue glutamine 6 is modified to 5-glutamyl serotonin; alternate. The residue at position 7 (threonine 7) is a Phosphothreonine. Arginine 9 bears the Citrulline; alternate mark. Position 9 is a symmetric dimethylarginine (arginine 9). Position 10 is an N6,N6,N6-trimethyllysine; alternate (lysine 10). N6,N6-dimethyllysine; alternate is present on lysine 10. N6-(2-hydroxyisobutyryl)lysine; alternate is present on lysine 10. Lysine 10 bears the N6-(beta-hydroxybutyryl)lysine; alternate mark. Lysine 10 bears the N6-acetyllysine; alternate mark. Lysine 10 carries the N6-crotonyllysine; alternate modification. Lysine 10 carries the N6-methyllysine; alternate modification. Lysine 10 is subject to N6-butyryllysine; alternate. At lysine 10 the chain carries N6-lactoyllysine; alternate. Threonine 12 carries the post-translational modification Phosphothreonine. Arginine 18 bears the Asymmetric dimethylarginine mark. Arginine 18 is subject to Citrulline; alternate. N6-(2-hydroxyisobutyryl)lysine; alternate occurs at positions 19, 24, 28, and 37. N6-(beta-hydroxybutyryl)lysine; alternate occurs at positions 19, 24, and 28. N6-acetyllysine; alternate occurs at positions 19, 24, 28, and 37. Residues lysine 19, lysine 24, and lysine 28 each carry the N6-crotonyllysine; alternate modification. Lysine 19, lysine 24, lysine 28, and lysine 37 each carry N6-methyllysine; alternate. An N6-butyryllysine; alternate mark is found at lysine 19 and lysine 24. N6-lactoyllysine; alternate occurs at positions 19, 24, and 28. An N6-glutaryllysine; alternate mark is found at lysine 19, lysine 24, and lysine 28. 2 positions are modified to N6,N6,N6-trimethyllysine; alternate: lysine 28 and lysine 37. N6,N6-dimethyllysine; alternate is present on residues lysine 28 and lysine 37. The residue at position 38 (lysine 38) is an N6-methyllysine. Tyrosine 42 carries the phosphotyrosine modification. Lysine 57 carries the N6,N6,N6-trimethyllysine; alternate modification. Position 57 is an N6-(2-hydroxyisobutyryl)lysine; alternate (lysine 57). At lysine 57 the chain carries N6-(beta-hydroxybutyryl)lysine; alternate. Position 57 is an N6-acetyllysine; alternate (lysine 57). Lysine 57 carries the N6-crotonyllysine; alternate modification. Residue lysine 57 is modified to N6-lactoyllysine; alternate. Lysine 57 carries the post-translational modification N6-glutaryllysine; alternate. Position 57 is an N6-methyllysine (lysine 57). At lysine 57 the chain carries N6-succinyllysine; alternate. Serine 58 carries the post-translational modification Phosphoserine. N6-(2-hydroxyisobutyryl)lysine; alternate is present on lysine 65. Lysine 65 bears the N6-methyllysine; alternate mark. Phosphoserine is present on serine 87. Position 108 is a phosphothreonine (threonine 108).

This sequence belongs to the histone H3 family. The nucleosome is a histone octamer containing two molecules each of H2A, H2B, H3 and H4 assembled in one H3-H4 heterotetramer and two H2A-H2B heterodimers. The octamer wraps approximately 147 bp of DNA. Interacts with HIRA, a chaperone required for its incorporation into nucleosomes. Does not interact with DAXX chaperone. Acetylation is generally linked to gene activation. Acetylation on Lys-10 (H3K9ac) impairs methylation at Arg-9 (H3R8me2s). Acetylation on Lys-19 (H3K18ac) and Lys-24 (H3K24ac) favors methylation at Arg-18 (H3R17me). In terms of processing, citrullination at Arg-9 (H3R8ci) and/or Arg-18 (H3R17ci) impairs methylation and represses transcription. Post-translationally, asymmetric dimethylation at Arg-18 (H3R17me2a) is linked to gene activation. Symmetric dimethylation at Arg-9 (H3R8me2s) is linked to gene repression. Asymmetric dimethylation at Arg-3 (H3R2me2a) is linked to gene repression and is mutually exclusive with H3 Lys-5 methylation (H3K4me2 and H3K4me3). H3R2me2a is present at the 3' of genes regardless of their transcription state and is enriched on inactive promoters, while it is absent on active promoters. Methylation at Lys-5 (H3K4me) facilitates subsequent acetylation of H3 and H4. Methylation at Lys-10 (H3K9me) and Lys-28 (H3K27me), which are linked to gene repression, are underrepresented. Methylation at Lys-10 (H3K9me) is a specific target for HP1 proteins (CBX1, CBX3 and CBX5) and prevents subsequent acetylation of H3 and H4. In terms of processing, phosphorylation at Thr-7 (H3T6ph) is a specific tag for epigenetic transcriptional activation that prevents demethylation of Lys-5 (H3K4me) by LSD1/KDM1A. At centromeres, specifically phosphorylated at Thr-12 (H3T11ph) from prophase to early anaphase. Phosphorylation at Thr-12 (H3T11ph) is a specific tag for epigenetic transcriptional activation that promotes demethylation of Lys-10 (H3K9me). Phosphorylation at Tyr-42 (H3Y41ph) promotes exclusion of CBX5 (HP1 alpha) from chromatin. Post-translationally, lysine deamination at Lys-5 (H3K4all) to form allysine. Allysine formation only takes place on H3K4me3 and results in gene repression. Crotonylation (Kcr) is specifically present in male germ cells and marks testis-specific genes in post-meiotic cells, including X-linked genes that escape sex chromosome inactivation in haploid cells. Crotonylation marks active promoters and enhancers and confers resistance to transcriptional repressors. It is also associated with post-meiotically activated genes on autosomes. In terms of processing, butyrylation of histones marks active promoters and competes with histone acetylation. It is present during late spermatogenesis. In terms of tissue distribution, expressed at low level in some tissues, such as testis and brain.

It localises to the nucleus. It is found in the chromosome. Primate-specific variant histone H3, which constitutes a core component of nucleosomes. Histone H3.Y-containing nucleosomes accumulate around transcription start sites and have flexible DNA ends, suggesting that they form relaxed chromatin that allows transcription factor access. Histone H1 binds less efficiently to histone H3.Y-containing nucleosomes. Nucleosomes wrap and compact DNA into chromatin, limiting DNA accessibility to the cellular machineries which require DNA as a template. Histones thereby play a central role in transcription regulation, DNA repair, DNA replication and chromosomal stability. DNA accessibility is regulated via a complex set of post-translational modifications of histones, also called histone code, and nucleosome remodeling. The sequence is that of Histone H3.Y from Homo sapiens (Human).